The following is a 1076-amino-acid chain: Protein EXPORTIN 1B (1076 aa).

Residues 37–103 (ADNILRDLKA…KNYISDVIVQ (67 aa)) form the Importin N-terminal domain. HEAT repeat units lie at residues 135–171 (AKWK…EVFD), 232–267 (IFES…LNFG), 282–319 (MNQL…FFTS), 475–514 (DTEK…SMVV), 564–601 (KFLK…KCKR), 613–650 (PFVS…AESD), 683–720 (LKEP…IFLD), 757–794 (REIL…DYAR), 799–836 (ARES…CTLE), 895–935 (ETGL…VLTD), and 943–988 (KLHV…YTTK).

It belongs to the exportin family. Present in mature pollen grains, unpollinated pistils, and 2-week-old seedlings.

It is found in the nucleus. It localises to the nuclear pore complex. Its subcellular location is the nucleus membrane. Functionally, receptor for the leucine-rich nuclear export signal (NES). Binds cooperatively to the NES on its target protein and to the small GTPase Ran in its active GTP-bound form. Required for the maternal-to-embryonic transition and during gametophyte development. This chain is Protein EXPORTIN 1B, found in Arabidopsis thaliana (Mouse-ear cress).